Reading from the N-terminus, the 288-residue chain is UPF0761 membrane protein HSM_1104 (288 aa).

6 consecutive transmembrane segments (helical) span residues 36–56, 92–112, 127–147, 176–196, 200–220, and 240–260; these read TLAL…FPVF, QMSA…IHSI, PAIF…IVIA, LLSL…YMVV, KVSI…FTLG, and AMAT…AVLL.

Belongs to the UPF0761 family.

The protein localises to the cell inner membrane. In Histophilus somni (strain 2336) (Haemophilus somnus), this protein is UPF0761 membrane protein HSM_1104.